A 234-amino-acid chain; its full sequence is 7-carboxy-7-deazaguanine synthase (234 aa).

Residues 36–38 (IQG) and R51 each bind substrate. In terms of domain architecture, Radical SAM core spans 42-234 (FVGYPSIFIR…LQTHKFLGIE (193 aa)). [4Fe-4S] cluster-binding residues include C55, C59, and C62. T64 contributes to the Mg(2+) binding site. Residue T100 coordinates substrate. S-adenosyl-L-methionine contacts are provided by residues G102, 144–146 (SPK), and 195–198 (QSMD).

It belongs to the radical SAM superfamily. 7-carboxy-7-deazaguanine synthase family. Homodimer. [4Fe-4S] cluster is required as a cofactor. S-adenosyl-L-methionine serves as cofactor. Requires Mg(2+) as cofactor.

It catalyses the reaction 6-carboxy-5,6,7,8-tetrahydropterin + H(+) = 7-carboxy-7-deazaguanine + NH4(+). It participates in purine metabolism; 7-cyano-7-deazaguanine biosynthesis. In terms of biological role, catalyzes the complex heterocyclic radical-mediated conversion of 6-carboxy-5,6,7,8-tetrahydropterin (CPH4) to 7-carboxy-7-deazaguanine (CDG), a step common to the biosynthetic pathways of all 7-deazapurine-containing compounds. This is 7-carboxy-7-deazaguanine synthase from Rickettsia prowazekii (strain Madrid E).